The chain runs to 119 residues: Large ribosomal subunit protein bL20 (119 aa).

The protein belongs to the bacterial ribosomal protein bL20 family.

In terms of biological role, binds directly to 23S ribosomal RNA and is necessary for the in vitro assembly process of the 50S ribosomal subunit. It is not involved in the protein synthesizing functions of that subunit. This Erythrobacter litoralis (strain HTCC2594) protein is Large ribosomal subunit protein bL20.